Consider the following 1217-residue polypeptide: CST complex subunit CTC1 (1217 aa).

Positions 328-347 (EADPKPLPMPSNSEDKKDPE) are disordered.

The protein belongs to the CTC1 family. As to quaternary structure, component of the CST complex, composed of TEN1/C17orf106, CTC1/C17orf68 and STN1; in the complex interacts directly with STN1. Interacts with ACD and POT1.

It is found in the nucleus. It localises to the chromosome. Its subcellular location is the telomere. Functionally, component of the CST complex proposed to act as a specialized replication factor promoting DNA replication under conditions of replication stress or natural replication barriers such as the telomere duplex. The CST complex binds single-stranded DNA with high affinity in a sequence-independent manner, while isolated subunits bind DNA with low affinity by themselves. Initially the CST complex has been proposed to protect telomeres from DNA degradation. However, the CST complex has been shown to be involved in several aspects of telomere replication. The CST complex inhibits telomerase and is involved in telomere length homeostasis; it is proposed to bind to newly telomerase-synthesized 3' overhangs and to terminate telomerase action implicating the association with the ACD:POT1 complex thus interfering with its telomerase stimulation activity. The CST complex is also proposed to be involved in fill-in synthesis of the telomeric C-strand probably implicating recruitment and activation of DNA polymerase alpha. The CST complex facilitates recovery from many forms of exogenous DNA damage; seems to be involved in the re-initiation of DNA replication at repaired forks and/or dormant origins. Involved in telomere maintenance. Involved in genome stability. May be in involved in telomeric C-strand fill-in during late S/G2 phase. The sequence is that of CST complex subunit CTC1 (CTC1) from Homo sapiens (Human).